The following is a 227-amino-acid chain: Cytochrome c oxidase subunit 2 (227 aa).

Residues M1–S14 are Mitochondrial intermembrane-facing. Residues P15 to M45 traverse the membrane as a helical segment. The Mitochondrial matrix portion of the chain corresponds to L46 to Q59. Residues E60 to M87 form a helical membrane-spanning segment. The Mitochondrial intermembrane segment spans residues D88–L227. Residues H161, C196, E198, C200, H204, and M207 each coordinate Cu cation. Residue E198 coordinates Mg(2+).

It belongs to the cytochrome c oxidase subunit 2 family. In terms of assembly, component of the cytochrome c oxidase (complex IV, CIV), a multisubunit enzyme composed of 14 subunits. The complex is composed of a catalytic core of 3 subunits MT-CO1, MT-CO2 and MT-CO3, encoded in the mitochondrial DNA, and 11 supernumerary subunits COX4I, COX5A, COX5B, COX6A, COX6B, COX6C, COX7A, COX7B, COX7C, COX8 and NDUFA4, which are encoded in the nuclear genome. The complex exists as a monomer or a dimer and forms supercomplexes (SCs) in the inner mitochondrial membrane with NADH-ubiquinone oxidoreductase (complex I, CI) and ubiquinol-cytochrome c oxidoreductase (cytochrome b-c1 complex, complex III, CIII), resulting in different assemblies (supercomplex SCI(1)III(2)IV(1) and megacomplex MCI(2)III(2)IV(2)). Found in a complex with TMEM177, COA6, COX18, COX20, SCO1 and SCO2. Interacts with TMEM177 in a COX20-dependent manner. Interacts with COX20. Interacts with COX16. Requires Cu cation as cofactor.

It localises to the mitochondrion inner membrane. It carries out the reaction 4 Fe(II)-[cytochrome c] + O2 + 8 H(+)(in) = 4 Fe(III)-[cytochrome c] + 2 H2O + 4 H(+)(out). In terms of biological role, component of the cytochrome c oxidase, the last enzyme in the mitochondrial electron transport chain which drives oxidative phosphorylation. The respiratory chain contains 3 multisubunit complexes succinate dehydrogenase (complex II, CII), ubiquinol-cytochrome c oxidoreductase (cytochrome b-c1 complex, complex III, CIII) and cytochrome c oxidase (complex IV, CIV), that cooperate to transfer electrons derived from NADH and succinate to molecular oxygen, creating an electrochemical gradient over the inner membrane that drives transmembrane transport and the ATP synthase. Cytochrome c oxidase is the component of the respiratory chain that catalyzes the reduction of oxygen to water. Electrons originating from reduced cytochrome c in the intermembrane space (IMS) are transferred via the dinuclear copper A center (CU(A)) of subunit 2 and heme A of subunit 1 to the active site in subunit 1, a binuclear center (BNC) formed by heme A3 and copper B (CU(B)). The BNC reduces molecular oxygen to 2 water molecules using 4 electrons from cytochrome c in the IMS and 4 protons from the mitochondrial matrix. In Ceratotherium simum (White rhinoceros), this protein is Cytochrome c oxidase subunit 2 (MT-CO2).